A 149-amino-acid chain; its full sequence is MADQLTEEQIAEFKEAFSLFDKDGDGTITTKELGTVMRSLGQNPTEAELQDMINEVDADGNGTIDFPEFLSLMARKMKDTDTEEELIEAFKVFDRDGNGLISAAELRHVMTNLGEKLTDEEVDEMIREADIDGDGHINYEEFVRMMMAK.

Residue alanine 2 is modified to N-acetylalanine. 4 EF-hand domains span residues 8–43 (EQIAEFKEAFSLFDKDGDGTITTKELGTVMRSLGQN), 44–79 (PTEAELQDMINEVDADGNGTIDFPEFLSLMARKMKD), 81–116 (DTEEELIEAFKVFDRDGNGLISAAELRHVMTNLGEK), and 117–149 (LTDEEVDEMIREADIDGDGHINYEEFVRMMMAK). Ca(2+) is bound by residues aspartate 21, aspartate 23, aspartate 25, threonine 27, glutamate 32, aspartate 57, aspartate 59, asparagine 61, threonine 63, glutamate 68, aspartate 94, aspartate 96, asparagine 98, and glutamate 105. Lysine 116 bears the N6,N6,N6-trimethyllysine mark. 5 residues coordinate Ca(2+): aspartate 130, aspartate 132, aspartate 134, histidine 136, and glutamate 141.

This sequence belongs to the calmodulin family.

Functionally, calmodulin mediates the control of a large number of enzymes, ion channels and other proteins by Ca(2+). Among the enzymes to be stimulated by the calmodulin-Ca(2+) complex are a number of protein kinases and phosphatases. This Tetrahymena pyriformis protein is Calmodulin.